A 106-amino-acid polypeptide reads, in one-letter code: MVNVPKTRRTYCKGKECRKHTQHKVTQYKAGKASLFAQGKRRYDRKQKGYGGQTKPVFHKKAKTTKKVVLRLECVVCKTKAQLSLKRCKHFELGGDKKQKGQALQF.

This sequence belongs to the eukaryotic ribosomal protein eL42 family.

This is Large ribosomal subunit protein eL42 (RPL44) from Debaryomyces hansenii (strain ATCC 36239 / CBS 767 / BCRC 21394 / JCM 1990 / NBRC 0083 / IGC 2968) (Yeast).